The sequence spans 457 residues: uncharacterized protein (457 aa).

In terms of domain architecture, TRAM spans 5 to 63 (PVKKNDVIEVEIIDLTHEGLGVAKVDHYPLFIENALPGEKLEIKVLKTGKSFGYGKVLT). The S-adenosyl-L-methionine site is built by Q287, Y316, E337, and D385. Catalysis depends on C412, which acts as the Nucleophile.

Belongs to the class I-like SAM-binding methyltransferase superfamily. RNA M5U methyltransferase family.

This is an uncharacterized protein from Enterococcus faecalis (strain ATCC 700802 / V583).